We begin with the raw amino-acid sequence, 271 residues long: tRNA pseudouridine synthase A (271 aa).

Asp-56 (nucleophile) is an active-site residue. Residue Tyr-120 participates in substrate binding.

This sequence belongs to the tRNA pseudouridine synthase TruA family. As to quaternary structure, homodimer.

The enzyme catalyses uridine(38/39/40) in tRNA = pseudouridine(38/39/40) in tRNA. Functionally, formation of pseudouridine at positions 38, 39 and 40 in the anticodon stem and loop of transfer RNAs. The chain is tRNA pseudouridine synthase A from Janthinobacterium sp. (strain Marseille) (Minibacterium massiliensis).